Reading from the N-terminus, the 650-residue chain is Chaperone protein DnaK (650 aa).

Residue Thr200 is modified to Phosphothreonine; by autocatalysis. The interval Ala614 to Gln634 is disordered.

The protein belongs to the heat shock protein 70 family.

In terms of biological role, acts as a chaperone. This Burkholderia cenocepacia (strain ATCC BAA-245 / DSM 16553 / LMG 16656 / NCTC 13227 / J2315 / CF5610) (Burkholderia cepacia (strain J2315)) protein is Chaperone protein DnaK.